The sequence spans 245 residues: Triosephosphate isomerase (245 aa).

4–6 (NWK) contacts substrate. H91 (electrophile) is an active-site residue. The active-site Proton acceptor is E161. Residues G167, S207, and 228–229 (GG) each bind substrate.

This sequence belongs to the triosephosphate isomerase family. Homodimer.

The protein resides in the cytoplasm. It carries out the reaction D-glyceraldehyde 3-phosphate = dihydroxyacetone phosphate. It functions in the pathway carbohydrate biosynthesis; gluconeogenesis. Its pathway is carbohydrate degradation; glycolysis; D-glyceraldehyde 3-phosphate from glycerone phosphate: step 1/1. Functionally, involved in the gluconeogenesis. Catalyzes stereospecifically the conversion of dihydroxyacetone phosphate (DHAP) to D-glyceraldehyde-3-phosphate (G3P). This Chlorobaculum tepidum (strain ATCC 49652 / DSM 12025 / NBRC 103806 / TLS) (Chlorobium tepidum) protein is Triosephosphate isomerase.